Consider the following 403-residue polypeptide: Myeloid cell surface antigen CD33 (403 aa).

A signal peptide spans 1-16 (MLWPLPLFLLCAGSLA). An Ig-like V-type domain is found at 17-120 (QDLEFQLVAP…DTGMYFFRVV (104 aa)). Residues 18–240 (DLEFQLVAPE…VTRKSGQMRE (223 aa)) lie on the Extracellular side of the membrane. 3 disulfides stabilise this stretch: cysteine 36–cysteine 169, cysteine 41–cysteine 100, and cysteine 163–cysteine 212. Asparagine 110 carries an N-linked (GlcNAc...) asparagine glycan. Arginine 118 provides a ligand contact to N-acetylneuraminate. The 84-residue stretch at 145 to 228 (PDIIIPGTLE…AGVTVERTIQ (84 aa)) folds into the Ig-like C2-type domain. A glycan (N-linked (GlcNAc...) asparagine) is linked at asparagine 160. Asparagine 230 carries an N-linked (GlcNAc...) asparagine glycan. The chain crosses the membrane as a helical span at residues 241 to 267 (LVLVAVGEATVKLLILGLCLVFLIVMF). The Cytoplasmic portion of the chain corresponds to 268 to 403 (CRRKTTKLSV…MLLCVSLTLS (136 aa)).

Belongs to the immunoglobulin superfamily. SIGLEC (sialic acid binding Ig-like lectin) family. As to quaternary structure, homodimer; disulfide-linked. Interacts with PTPN6/SHP-1 and PTPN11/SHP-2 upon phosphorylation. Interacts with C1QA (via C-terminus); this interaction activates CD33 inhibitory motifs. In terms of processing, glycosylated. Phosphorylation is involved in binding to PTPN6 and PTPN11. Expressed on myeloid precursors in the bone marrow. In the peripheral blood, mostly expressed on granulocytes.

It localises to the cell membrane. In terms of biological role, sialic-acid-binding immunoglobulin-like lectin (Siglec) that plays a role in mediating cell-cell interactions and in maintaining immune cells in a resting state. Preferentially binds sialic acid to the short O-linked glycans of certain mucins. The sequence is that of Myeloid cell surface antigen CD33 (Cd33) from Mus musculus (Mouse).